The sequence spans 1034 residues: MPLCPLLLLALGLRLTGTLNSNDPNVCTFWESFTTTTKESHLRPFSLLPAESCHRPWEDPHTCAQPTVVYRTVYRQVVKMDSRPRLQCCRGYYESRGACVPLCAQECVHGRCVAPNQCQCAPGWRGGDCSSECAPGMWGPQCDKFCHCGNNSSCDPKSGTCFCPSGLQPPNCLQPCPAGHYGPACQFDCQCYGASCDPQDGACFCPPGRAGPSCNVPCSQGTDGFFCPRTYPCQNGGVPQGSQGSCSCPPGWMGVICSLPCPEGFHGPNCTQECRCHNGGLCDRFTGQCHCAPGYIGDRCQEECPVGRFGQDCAETCDCAPGARCFPANGACLCEHGFTGDRCTERLCPDGRYGLSCQEPCTCDPEHSLSCHPMHGECSCQPGWAGLHCNESCPQDTHGPGCQEHCLCLHGGLCLADSGLCRCAPGYTGPHCANLCPPDTYGINCSSRCSCENAIACSPIDGTCICKEGWQRGNCSVPCPLGTWGFNCNASCQCAHDGVCSPQTGACTCTPGWHGAHCQLPCPKGQFGEGCASVCDCDHSDGCDPVHGQCRCQAGWMGTRCHLPCPEGFWGANCSNTCTCKNGGTCVSENGNCVCAPGFRGPSCQRPCPPGRYGKRCVQCKCNNNHSSCHPSDGTCSCLAGWTGPDCSEACPPGHWGLKCSQLCQCHHGGTCHPQDGSCICTPGWTGPNCLEGCPPRMFGVNCSQLCQCDLGEMCHPETGACVCPPGHSGADCKMGSQESFTIMPTSPVTHNSLGAVIGIAVLGTLVVALIALFIGYRQWQKGKEHEHLAVAYSTGRLDGSDYVMPDVSPSYSHYYSNPSYHTLSQCSPNPPPPNKVPGSQLFVSSQAPERPSRAHGRENHVTLPADWKHRREPHERGASHLDRSYSCSYSHRNGPGPFCHKGPISEEGLGASVMSLSSENPYATIRDLPSLPGEPRESGYVEMKGPPSVSPPRQSLHLRDRQQRQLQPQRDSGTYEQPSPLSHNEESLGSTPPLPPGLPPGHYDSPKNSHIPGHYDLPPVRHPPSPPSRRQDR.

The signal sequence occupies residues 1 to 18; that stretch reads MPLCPLLLLALGLRLTGT. The Extracellular portion of the chain corresponds to 19-754; the sequence is LNSNDPNVCT…PTSPVTHNSL (736 aa). An EMI domain is found at 23-101; sequence DPNVCTFWES…YYESRGACVP (79 aa). 3 disulfides stabilise this stretch: Cys-27–Cys-89, Cys-53–Cys-63, and Cys-88–Cys-99. The N-linked (GlcNAc...) asparagine glycan is linked to Asn-150. EGF-like domains lie at 181–215, 223–258, 266–301, 309–344, and 398–433; these read YGPACQFDCQCYGASCDPQDGACFCPPGRAGPSCN, DGFFCPRTYPCQNGGVPQGSQGSCSCPPGWMGVICS, HGPNCTQECRCHNGGLCDRFTGQCHCAPGYIGDRCQ, FGQDCAETCDCAPGARCFPANGACLCEHGFTGDRCT, and HGPGCQEHCLCLHGGLCLADSGLCRCAPGYTGPHCA. 5 disulfides stabilise this stretch: Cys-185/Cys-196, Cys-189/Cys-203, Cys-205/Cys-214, Cys-233/Cys-246, and Cys-248/Cys-257. Asn-269 is a glycosylation site (N-linked (GlcNAc...) asparagine). 9 disulfide bridges follow: Cys-270–Cys-282, Cys-276–Cys-289, Cys-291–Cys-300, Cys-313–Cys-325, Cys-319–Cys-332, Cys-334–Cys-343, Cys-402–Cys-414, Cys-408–Cys-421, and Cys-423–Cys-432. Residue Asn-474 is glycosylated (N-linked (GlcNAc...) asparagine). 4 EGF-like domains span residues 484–519, 575–605, 613–648, and 656–691; these read WGFNCNASCQCAHDGVCSPQTGACTCTPGWHGAHCQ, SNTCTCKNGGTCVSENGNCVCAPGFRGPSCQ, YGKRCVQCKCNNNHSSCHPSDGTCSCLAGWTGPDCS, and WGLKCSQLCQCHHGGTCHPQDGSCICTPGWTGPNCL. 12 cysteine pairs are disulfide-bonded: Cys-488–Cys-500, Cys-494–Cys-507, Cys-509–Cys-518, Cys-578–Cys-586, Cys-580–Cys-593, Cys-595–Cys-604, Cys-617–Cys-629, Cys-622–Cys-636, Cys-638–Cys-647, Cys-660–Cys-672, Cys-666–Cys-679, and Cys-681–Cys-690. The helical transmembrane segment at 755–775 threads the bilayer; that stretch reads GAVIGIAVLGTLVVALIALFI. At 776–1034 the chain is on the cytoplasmic side; sequence GYRQWQKGKE…PSPPSRRQDR (259 aa). Positions 823 to 883 are disordered; that stretch reads TLSQCSPNPP…PHERGASHLD (61 aa). A compositionally biased stretch (basic and acidic residues) spans 851–883; the sequence is RPSRAHGRENHVTLPADWKHRREPHERGASHLD. Tyr-923 carries the post-translational modification Phosphotyrosine. The segment at 925 to 1034 is disordered; the sequence is TIRDLPSLPG…PSPPSRRQDR (110 aa). Position 951 is a phosphoserine (Ser-951). A compositionally biased stretch (polar residues) spans 972–991; it reads DSGTYEQPSPLSHNEESLGS. The residue at position 1026 (Ser-1026) is a Phosphoserine.

This sequence belongs to the MEGF family. In terms of assembly, interacts with SHC2 upon its aggregation-induced tyrosine phosphorylation. Interacts (via extracellular domain) with SVEP1. In terms of processing, phosphorylated in the intracellular domain on tyrosine residues. Phosphorylated on tyrosine residues by SRC. Tyrosine phosphorylation is detected upon platelet aggregation stimulated by collagen, TRAP and thrombin and platelet-platelet contacts but not after platelet activation. Tyrosine phosphorylation enhanced its association with SHC1 and SHC2. Phosphorylated in the intracellular domain on tyrosine residues. Phosphorylated when in the presence of SVEP1. As to expression, expressed in thymocytes, bone marrow stromal and osteogenic cells (at protein level). Strongly expressed in kidney and heart. Moderately expressed in lung, spleen, thymus, liver, brain, testis, skin and stomach. Expressed in hematopoietic stem progenitor cells.

Its subcellular location is the cell membrane. It localises to the cell projection. The protein resides in the lamellipodium. Required for SVEP1-mediated platelet activation, via its interaction with SVEP1 and subsequent activation of AKT/mTOR signaling. May be involved in the early stages of hematopoiesis. This is Platelet endothelial aggregation receptor 1 (Pear1) from Mus musculus (Mouse).